The following is a 217-amino-acid chain: NADH-quinone oxidoreductase subunit I (217 aa).

Residues 22-41 (TTEQYPEEKKETAPRFHGRH) are disordered. 4Fe-4S ferredoxin-type domains lie at 43 to 73 (LNRHPDGLEKCVGCELCAWACPADAIYVEGA) and 89 to 118 (RVYQINYLRCILCGLCIEACPTRALTMSND). Positions 53, 56, 59, 63, 98, 101, 104, and 108 each coordinate [4Fe-4S] cluster. The tract at residues 193–217 (ARRTAGEHSRADEVPAHGAGSERPR) is disordered.

Belongs to the complex I 23 kDa subunit family. In terms of assembly, NDH-1 is composed of 14 different subunits. Subunits NuoA, H, J, K, L, M, N constitute the membrane sector of the complex. [4Fe-4S] cluster is required as a cofactor.

The protein resides in the cell membrane. It catalyses the reaction a quinone + NADH + 5 H(+)(in) = a quinol + NAD(+) + 4 H(+)(out). Functionally, NDH-1 shuttles electrons from NADH, via FMN and iron-sulfur (Fe-S) centers, to quinones in the respiratory chain. The immediate electron acceptor for the enzyme in this species is believed to be ubiquinone. Couples the redox reaction to proton translocation (for every two electrons transferred, four hydrogen ions are translocated across the cytoplasmic membrane), and thus conserves the redox energy in a proton gradient. This Frankia casuarinae (strain DSM 45818 / CECT 9043 / HFP020203 / CcI3) protein is NADH-quinone oxidoreductase subunit I.